A 1141-amino-acid polypeptide reads, in one-letter code: Tetratricopeptide repeat protein 17 (1141 aa).

One copy of the TPR 1 repeat lies at 295–328; it reads FTSYYTLGNIYAMLGEYNHSVLCYDHALQARPGF. Residues 340–382 are a coiled coil; it reads CQQKLEQKLEAQHRSLQRTLNELKEYQKQHDHYLRQQEILEKH. 5 TPR repeats span residues 619–652, 689–722, 1014–1048, 1051–1084, and 1085–1118; these read WLILNEAGLYWRAVGNSTFAIACLQRALNLAPLQ, PLTFLSLGNAYLALKNISGALEAFRQALKLTTKC, SWVLSSMAALYWRVKGQGKKAIDCLRQALHYAPHQ, DVPLISLANILHNAKLWNDAVIVATMAVEIAPHF, and AVNHFTLGNVYVAMEEFEKALVWYESTLKLQPEF.

Belongs to the TTC17 family. As to quaternary structure, interacts with CATIP. Expressed in germ cells as well as in somatic cells of the testis (at protein level).

The protein resides in the cytoplasm. The protein localises to the cell membrane. Its subcellular location is the cytoskeleton. In terms of biological role, plays a role in primary ciliogenesis by modulating actin polymerization. This is Tetratricopeptide repeat protein 17 (TTC17) from Homo sapiens (Human).